We begin with the raw amino-acid sequence, 183 residues long: Transcription factor E (183 aa).

An HTH TFE/IIEalpha-type domain is found at 4-97 (YIELVRRYVY…SWSIKDEDIR (94 aa)).

This sequence belongs to the TFE family. As to quaternary structure, monomer. Interaction with RNA polymerase subunits RpoF and RpoE is necessary for Tfe stimulatory transcription activity. Able to interact with Tbp and RNA polymerase in the absence of DNA promoter. Interacts both with the preinitiation and elongation complexes.

Its function is as follows. Transcription factor that plays a role in the activation of archaeal genes transcribed by RNA polymerase. Facilitates transcription initiation by enhancing TATA-box recognition by TATA-box-binding protein (Tbp), and transcription factor B (Tfb) and RNA polymerase recruitment. Not absolutely required for transcription in vitro, but particularly important in cases where Tbp or Tfb function is not optimal. It dynamically alters the nucleic acid-binding properties of RNA polymerases by stabilizing the initiation complex and destabilizing elongation complexes. Seems to translocate with the RNA polymerase following initiation and acts by binding to the non template strand of the transcription bubble in elongation complexes. The protein is Transcription factor E of Caldivirga maquilingensis (strain ATCC 700844 / DSM 13496 / JCM 10307 / IC-167).